The following is a 345-amino-acid chain: Heat stress transcription factor A-2 (345 aa).

The segment covering 17-30 (GSVAASSSVGSSSS) has biased composition (low complexity). A disordered region spans residues 17 to 40 (GSVAASSSVGSSSSPRPMEGLNET). The DNA-binding element occupies 42–136 (PPPFLTKTYE…LLKNIKRRRN (95 aa)). The interval 150–216 (SCVEVGQYGF…QMMTFLAKAL (67 aa)) is hydrophobic repeat HR-A/B. The Nuclear localization signal signature appears at 231 to 238 (EKKSLFGL). The short motif at 273–282 (EMLFAAAIDD) is the AHA1 element. K315 participates in a covalent cross-link: Glycyl lysine isopeptide (Lys-Gly) (interchain with G-Cter in SUMO). Residues 324–333 (LDWDSQDLHD) carry the AHA2 motif. The Nuclear export signal signature appears at 334 to 341 (MVDQMGFL).

This sequence belongs to the HSF family. Class A subfamily. Homotrimer. Interacts with SUMO1. Binds to HSBP. In terms of processing, exhibits temperature-dependent phosphorylation. Post-translationally, sumoylated at Lys-315. Sumoylation represses its function.

It is found in the cytoplasm. Its subcellular location is the nucleus. Functionally, transcriptional activator that specifically binds DNA sequence 5'-AGAAnnTTCT-3' known as heat shock promoter elements (HSE). Seems to be involved in other environmental stress responses. Activates ascorbate peroxidase 2 (APX2) in addition to several heat shock protein (HSPs). Binds to the promoter of SGIP1 and activates its expression in heat acclimated plants. Involved in the mechanisms necessary for quick response to heat and subsequent heritable transgenerational memory of heat acclimation (global warming) such as early flowering and attenuated immunity; this process includes epigenetic regulation as well as post-transcriptional gene silencing (PTGS). In response to heat, HSFA2 is activated and promotes the expression of REF6 which in turn derepresses HSFA2, thus establishing an inheritable feedback loop able to trigger SGIP1 and subsequent SGIP1-mediated SGS3 degradation; this prevents the biosynthesis of trans-acting siRNA (tasiRNA) and leads to the release of HTT5, which drives early flowering but attenuates immunity. This is Heat stress transcription factor A-2 from Arabidopsis thaliana (Mouse-ear cress).